The sequence spans 100 residues: Urease subunit gamma (100 aa).

Belongs to the urease gamma subunit family. In terms of assembly, heterotrimer of UreA (gamma), UreB (beta) and UreC (alpha) subunits. Three heterotrimers associate to form the active enzyme.

The protein resides in the cytoplasm. It catalyses the reaction urea + 2 H2O + H(+) = hydrogencarbonate + 2 NH4(+). The protein operates within nitrogen metabolism; urea degradation; CO(2) and NH(3) from urea (urease route): step 1/1. The protein is Urease subunit gamma of Halalkalibacterium halodurans (strain ATCC BAA-125 / DSM 18197 / FERM 7344 / JCM 9153 / C-125) (Bacillus halodurans).